The chain runs to 433 residues: 23S rRNA (uracil(1939)-C(5))-methyltransferase RlmD (433 aa).

The 59-residue stretch at 10 to 68 (RTTTRQIITVSVNDLDSFGQGVARHNGKTLFIPGLLPQENAEVTVTEDKKQYARAKVVR) folds into the TRAM domain. [4Fe-4S] cluster contacts are provided by Cys-81, Cys-87, Cys-90, and Cys-162. S-adenosyl-L-methionine-binding residues include Gln-265, Phe-294, Asn-299, Glu-315, Asn-342, and Asp-363. Catalysis depends on Cys-389, which acts as the Nucleophile.

Belongs to the class I-like SAM-binding methyltransferase superfamily. RNA M5U methyltransferase family. RlmD subfamily.

The catalysed reaction is uridine(1939) in 23S rRNA + S-adenosyl-L-methionine = 5-methyluridine(1939) in 23S rRNA + S-adenosyl-L-homocysteine + H(+). Catalyzes the formation of 5-methyl-uridine at position 1939 (m5U1939) in 23S rRNA. This is 23S rRNA (uracil(1939)-C(5))-methyltransferase RlmD from Escherichia coli O157:H7.